The sequence spans 157 residues: UPF0225 protein Psyr_3863 (157 aa).

It belongs to the UPF0225 family.

The protein is UPF0225 protein Psyr_3863 of Pseudomonas syringae pv. syringae (strain B728a).